The sequence spans 847 residues: MSDTTTGSDAADAAVPATTPADLEAASARVDELRAEIERHRDAYYGETGGTVSDAEYDALERELRAIEDAHPTLRSQDSPTQTVGGRAETTLFAPVTHAERMLSLDNVFSEEELAEWAAKVERDAGRGRVRYLSELKIDGLAINLRYEHGVLVTAATRGDGVVGEDVTQNVLTMGTVPERLAGSGHPPLVEVRGEIFFPVAEFDELNARQLEVGERVFANPRNAAAGSLRQKEEGKSPARLELMHARIRRLRMLVHGIGAWPVRELERDAHVSAQSEVYGLLEAWGLPISTHFRVFDDIAEVAGFVRRQGADRAAVEHQIDGIVVKVDDLGLHEELGATSRAPRWATAYKYPPEEVNTTLLDIVVSVGRTGRATPFAVMEKVEVAGSEVRQATLHNQQVVKAKGVLIGDTVVLRKAGDVIPEVLGPVVELRTGKEHEFVMPTLCPECQTPLKPAKEGDIDLRCPNARSCPAQVRGRVEHVASRGALDIEGLGEVAAAALTQPLEPEDPPLETEAGLFELTMADLVPITVVVRDAETGMVKVDEKTGEAKRVTPFRRKRVLKRDGAFDPAEPWGDEASVPSKSAEVLLENLEKAKTQDLWRILVALSIRHVGPVAARALAGWFGSLDVIRAASREELAAVDGVGGIIADALLDWFEVDWHREIVARWEKAGVVTAVPGHPGPGAAAAAGGVLAGLAVVATGSLEGYTREGALEAIMAAGGKAGSSVSKKTHYVAAGPGAGSKLGKAEALGVRIIDAAEFRLLVEQGPDAIALPEADPVPDAAETAPDGGSAEDATAATAGAAEAATAEAKPKRARKRKAPAAAAAAPPTDVEAGTAVHAEPDGPAETP.

The span at 1–22 (MSDTTTGSDAADAAVPATTPAD) shows a compositional bias: low complexity. A disordered region spans residues 1 to 23 (MSDTTTGSDAADAAVPATTPADL). NAD(+)-binding positions include 54 to 58 (DAEYD), 104 to 105 (SL), and glutamate 135. The N6-AMP-lysine intermediate role is filled by lysine 137. Arginine 158, glutamate 195, lysine 326, and lysine 350 together coordinate NAD(+). Positions 444, 447, 463, and 469 each coordinate Zn(2+). In terms of domain architecture, BRCT spans 686–775 (AAGGVLAGLA…PDAIALPEAD (90 aa)). The tract at residues 770–847 (ALPEADPVPD…AEPDGPAETP (78 aa)) is disordered. 2 stretches are compositionally biased toward low complexity: residues 786–807 (DGGS…ATAE) and 819–833 (PAAA…VEAG).

This sequence belongs to the NAD-dependent DNA ligase family. LigA subfamily. The cofactor is Mg(2+). Mn(2+) is required as a cofactor.

The catalysed reaction is NAD(+) + (deoxyribonucleotide)n-3'-hydroxyl + 5'-phospho-(deoxyribonucleotide)m = (deoxyribonucleotide)n+m + AMP + beta-nicotinamide D-nucleotide.. In terms of biological role, DNA ligase that catalyzes the formation of phosphodiester linkages between 5'-phosphoryl and 3'-hydroxyl groups in double-stranded DNA using NAD as a coenzyme and as the energy source for the reaction. It is essential for DNA replication and repair of damaged DNA. In Clavibacter sepedonicus (Clavibacter michiganensis subsp. sepedonicus), this protein is DNA ligase.